The sequence spans 95 residues: Co-chaperonin GroES (95 aa).

Belongs to the GroES chaperonin family. As to quaternary structure, heptamer of 7 subunits arranged in a ring. Interacts with the chaperonin GroEL.

It localises to the cytoplasm. In terms of biological role, together with the chaperonin GroEL, plays an essential role in assisting protein folding. The GroEL-GroES system forms a nano-cage that allows encapsulation of the non-native substrate proteins and provides a physical environment optimized to promote and accelerate protein folding. GroES binds to the apical surface of the GroEL ring, thereby capping the opening of the GroEL channel. The polypeptide is Co-chaperonin GroES (Pelobacter propionicus (strain DSM 2379 / NBRC 103807 / OttBd1)).